The sequence spans 248 residues: Tetraspanin-17 (248 aa).

Residues 1–7 lie on the Cytoplasmic side of the membrane; sequence MSEVRTG. Residues 8 to 28 form a helical membrane-spanning segment; the sequence is FLTMTTIILISIGLTMMGTGL. Topologically, residues 29-44 are extracellular; the sequence is YQKTTMSSCIRETSSQ. The chain crosses the membrane as a helical span at residues 45–65; sequence FTLLGLLLLLIPQIGLYGICC. Topologically, residues 66 to 69 are cytoplasmic; sequence RSKR. The helical transmembrane segment at 70–90 threads the bilayer; sequence LFNFFFYGMVVLIIIVSYYSI. At 91-210 the chain is on the extracellular side; that stretch reads KCSIYNTTFG…ILKAIVHQWK (120 aa). Residues N96, N109, and N141 are each glycosylated (N-linked (GlcNAc...) asparagine). The helical transmembrane segment at 211-231 threads the bilayer; that stretch reads YLSMFAYPALVLSCISLAIAW. The Cytoplasmic portion of the chain corresponds to 232–248; the sequence is SLKETIHENEDYRGSYS.

Belongs to the tetraspanin (TM4SF) family.

The protein resides in the membrane. In terms of biological role, may be involved in the regulation of cell differentiation. The protein is Tetraspanin-17 (TET17) of Arabidopsis thaliana (Mouse-ear cress).